A 123-amino-acid chain; its full sequence is Large ribosomal subunit protein uL14 (123 aa).

Belongs to the universal ribosomal protein uL14 family. Part of the 50S ribosomal subunit. Forms a cluster with proteins L3 and L19. In the 70S ribosome, L14 and L19 interact and together make contacts with the 16S rRNA in bridges B5 and B8.

Binds to 23S rRNA. Forms part of two intersubunit bridges in the 70S ribosome. The sequence is that of Large ribosomal subunit protein uL14 from Vibrio parahaemolyticus serotype O3:K6 (strain RIMD 2210633).